The sequence spans 183 residues: Early E3 20.2 kDa glycoprotein (183 aa).

Residues N30, N73, N117, N134, and N135 are each glycosylated (N-linked (GlcNAc...) asparagine; by host).

This sequence belongs to the adenoviridae E3_20 family.

The protein is Early E3 20.2 kDa glycoprotein of Homo sapiens (Human).